A 98-amino-acid polypeptide reads, in one-letter code: Gibberellin-regulated protein 1 (98 aa).

A signal peptide spans 1 to 23; it reads MAISKALIASLLISLLVLQLVQA.

Belongs to the GASA family. In terms of processing, six disulfide bonds may be present. As to expression, expressed in flower buds, style, stamen filaments, vasculature of sepals, flower abscission zone and green siliques. Lower levels seen in the root phloem, cotyledons and vasculature of rosette leaves.

The protein localises to the secreted. Gibberellin-regulated protein that may function in hormonal controlled steps of development such as seed germination, flowering and seed maturation. This is Gibberellin-regulated protein 1 (GASA1) from Arabidopsis thaliana (Mouse-ear cress).